A 349-amino-acid chain; its full sequence is ATPase GET3 (349 aa).

27–34 (KGGVGKTT) contacts ATP. The active site involves Asp58. The ATP site is built by Glu240 and Asn267. Zn(2+)-binding residues include Cys280 and Cys283.

The protein belongs to the arsA ATPase family. In terms of assembly, homodimer. Component of the Golgi to ER traffic (GET) complex, which is composed of GET1, GET2 and GET3. Within the complex, GET1 and GET2 form a heterotetramer which is stabilized by phosphatidylinositol binding and which binds to the GET3 homodimer. Interacts with the chloride channel protein GEF1.

The protein resides in the cytoplasm. Its subcellular location is the endoplasmic reticulum. It is found in the golgi apparatus. Functionally, ATPase required for the post-translational delivery of tail-anchored (TA) proteins to the endoplasmic reticulum. Recognizes and selectively binds the transmembrane domain of TA proteins in the cytosol. This complex then targets to the endoplasmic reticulum by membrane-bound receptors GET1 and GET2, where the tail-anchored protein is released for insertion. This process is regulated by ATP binding and hydrolysis. ATP binding drives the homodimer towards the closed dimer state, facilitating recognition of newly synthesized TA membrane proteins. ATP hydrolysis is required for insertion. Subsequently, the homodimer reverts towards the open dimer state, lowering its affinity for the GET1-GET2 receptor, and returning it to the cytosol to initiate a new round of targeting. Cooperates with the HDEL receptor ERD2 to mediate the ATP-dependent retrieval of resident ER proteins that contain a C-terminal H-D-E-L retention signal from the Golgi to the ER. Involved in low-level resistance to the oxyanions arsenite and arsenate, and in heat tolerance. This Eremothecium gossypii (strain ATCC 10895 / CBS 109.51 / FGSC 9923 / NRRL Y-1056) (Yeast) protein is ATPase GET3.